The following is a 397-amino-acid chain: Subtilisin-like protease 12 (397 aa).

Positions 1–19 (MSIFKLMVIYFTLFWVVNA) are cleaved as a signal peptide. A propeptide spanning residues 20–116 (AQLLDLDSHG…VEPNREMKAA (97 aa)) is cleaved from the precursor. The 81-residue stretch at 35 to 115 (YIVVMKNGVS…FVEPNREMKA (81 aa)) folds into the Inhibitor I9 domain. N-linked (GlcNAc...) asparagine glycans are attached at residues Asn123, Asn136, and Asn150. The 273-residue stretch at 125-397 (TWGLARISHM…DKLLYNGSGA (273 aa)) folds into the Peptidase S8 domain. Active-site charge relay system residues include Asp157 and His188. N-linked (GlcNAc...) asparagine glycans are attached at residues Asn249, Asn305, and Asn334. Ser343 (charge relay system) is an active-site residue. N-linked (GlcNAc...) asparagine glycosylation is found at Asn385 and Asn393.

It belongs to the peptidase S8 family.

The protein resides in the secreted. Functionally, secreted subtilisin-like serine protease with keratinolytic activity that contributes to pathogenicity. This is Subtilisin-like protease 12 (SUB12) from Arthroderma gypseum (strain ATCC MYA-4604 / CBS 118893) (Microsporum gypseum).